The following is a 333-amino-acid chain: Aquaporin-1 (333 aa).

Positions 1 to 26 (MQKMSEKPLYRAAENPTRNADRRAGR) are disordered. The next 2 helical transmembrane spans lie at 85–105 (LAMF…HFTG) and 116–136 (FHGF…GGII). The NPA 1 motif lies at 137–139 (NPA). The next 3 membrane-spanning stretches (helical) occupy residues 156–176 (LVLV…VYLI), 213–233 (TGAI…FLSI), and 245–265 (LFPF…SYSA). The NPA 2 signature appears at 270–272 (NPA). Residues 303-323 (WLFPYVGALFGAVMYQIFVGV) form a helical membrane-spanning segment.

Belongs to the MIP/aquaporin (TC 1.A.8) family.

The protein resides in the cell membrane. Its function is as follows. Aquaglyceroporin that may modulate the water content and osmolytes during anhydrobiosis. The chain is Aquaporin-1 from Milnesium tardigradum (Water bear).